A 201-amino-acid polypeptide reads, in one-letter code: MLGVQKKCSTRKTAARKTVVRKPAAKKTAAKKAPVRKVAAKKTVARKTVAKKTVAARKPVAKKATAKKAPVRKVAAKKTVARKTVAKKTVAARKPVAKKATAKKAPVRKAVAKKTVARKTVAKKTVAARKPVAKRVASTKKSSIAVKAGVCMKKHKHTAACGRVAASGVKVCASAAKRKTNPNRSRTAHSWRQQLMKLVAR.

The disordered stretch occupies residues 1 to 69 (MLGVQKKCST…VAKKATAKKA (69 aa)). Basic residues-rich tracts occupy residues 8-50 (CSTR…KTVA) and 59-69 (PVAKKATAKKA).

The protein belongs to the histone H1/H5 family. HCT subfamily.

Its function is as follows. Might have a role in establishing the nucleoid structure of elementary bodies. The sequence is that of Histone-like protein HC2 (hctB) from Chlamydia trachomatis serovar D (strain ATCC VR-885 / DSM 19411 / UW-3/Cx).